A 39-amino-acid chain; its full sequence is U-limacoditoxin(13)-As54 (39 aa).

Residues methionine 1–cysteine 23 form the signal peptide. Phenylalanine 37 bears the Phenylalanine amide mark.

It belongs to the FARP (FMRFamide related peptide) family. As to expression, expressed by the venom secretory cell of the spine. The spine is a cuticular structure containing a single large nucleated venom-secreting cell at its base. It is an independent unit capable of producing, storing and injecting venom. On the back of A.stimulea caterpillars, spines are grouped together by 50 to 100 to form scoli, of which there are eight.

It is found in the secreted. Strongly activates (at 30 uM) the human neuropeptide FF receptor 1 (NPFF1R), a G-protein coupled receptor, with an effect that is equipotent to the endogenous RFRP-1 ligand in activating NPFFR1. Is toxic when injected into Drosophila melanogaster. Also shows a moderate anthelmintic activity against the parasitic nematode H.contortus (drug susceptible Kirby isolate) (IC(50)=20.1 uM). In Acharia stimulea (Saddleback caterpillar moth), this protein is U-limacoditoxin(13)-As54.